The chain runs to 146 residues: ATP synthase epsilon chain (146 aa).

The interval 102–122 is disordered; sequence QSAKKRAEQHMQEAKEKHNER.

This sequence belongs to the ATPase epsilon chain family. F-type ATPases have 2 components, CF(1) - the catalytic core - and CF(0) - the membrane proton channel. CF(1) has five subunits: alpha(3), beta(3), gamma(1), delta(1), epsilon(1). CF(0) has three main subunits: a, b and c.

The protein resides in the cell membrane. Its function is as follows. Produces ATP from ADP in the presence of a proton gradient across the membrane. The polypeptide is ATP synthase epsilon chain (Lactobacillus gasseri (strain ATCC 33323 / DSM 20243 / BCRC 14619 / CIP 102991 / JCM 1131 / KCTC 3163 / NCIMB 11718 / NCTC 13722 / AM63)).